We begin with the raw amino-acid sequence, 307 residues long: GTPase Era (307 aa).

One can recognise an Era-type G domain in the interval 14–184 (HSGFVAIVGK…REQILDILPE (171 aa)). A G1 region spans residues 22 to 29 (GKPNVGKS). A GTP-binding site is contributed by 22-29 (GKPNVGKS). Residues 48–52 (QTTRR) form a G2 region. The interval 69–72 (DTPG) is G3. Residues 69–73 (DTPGL) and 131–134 (NKTD) each bind GTP. Residues 131–134 (NKTD) are G4. The segment at 162–164 (LSA) is G5. In terms of domain architecture, KH type-2 spans 215–292 (LREELPYAVA…FLGLEVIVIP (78 aa)).

It belongs to the TRAFAC class TrmE-Era-EngA-EngB-Septin-like GTPase superfamily. Era GTPase family. As to quaternary structure, monomer.

Its subcellular location is the cytoplasm. The protein resides in the cell membrane. Its function is as follows. An essential GTPase that binds both GDP and GTP, with rapid nucleotide exchange. Plays a role in 16S rRNA processing and 30S ribosomal subunit biogenesis and possibly also in cell cycle regulation and energy metabolism. In Deinococcus deserti (strain DSM 17065 / CIP 109153 / LMG 22923 / VCD115), this protein is GTPase Era.